We begin with the raw amino-acid sequence, 46 residues long: Large ribosomal subunit protein bL36 (46 aa).

It belongs to the bacterial ribosomal protein bL36 family.

The chain is Large ribosomal subunit protein bL36 from Klebsiella pneumoniae (strain 342).